We begin with the raw amino-acid sequence, 375 residues long: Alcohol dehydrogenase E chain (375 aa).

S2 is subject to N-acetylserine. Zn(2+)-binding residues include C47, S49, H68, C98, C101, C104, C112, and C175. Residues S49 and H68 each contribute to the an alcohol site. S49 contacts NAD(+). Residues 200–205 (GLGGVG), D224, K229, V293, 293–295 (VGV), F320, and R370 contribute to the NAD(+) site.

Belongs to the zinc-containing alcohol dehydrogenase family. Class-I subfamily. Dimer of identical or non-identical chains of two types (E and S) coded by 2 separate genes at different loci. Requires Zn(2+) as cofactor.

The protein resides in the cytoplasm. It carries out the reaction a primary alcohol + NAD(+) = an aldehyde + NADH + H(+). The enzyme catalyses a secondary alcohol + NAD(+) = a ketone + NADH + H(+). The chain is Alcohol dehydrogenase E chain from Equus caballus (Horse).